The chain runs to 255 residues: F-box/SPRY domain-containing protein 1 (255 aa).

The region spanning 3–51 is the F-box domain; the sequence is DPVAALCNYNVLEVIFSYLELEDLSHCSQVCKSWYHFLNDENSDVWRWH. Positions 61–253 constitute a B30.2/SPRY domain; that stretch reads LKSDLLSSVS…VSMVYLGTPL (193 aa).

The protein belongs to the FBXO45/Fsn family. Component of an E3 ubiquitin ligase complex composed of hiw and Fsn.

It is found in the synapse. The protein operates within protein modification; protein ubiquitination. Its function is as follows. Required in the presynaptic motoneuron to down-regulate the levels of wnd and restrain synaptic terminal growth at the neuromuscular junction (NMJ). This is F-box/SPRY domain-containing protein 1 from Drosophila erecta (Fruit fly).